Reading from the N-terminus, the 202-residue chain is Small ribosomal subunit protein uS4 (202 aa).

The S4 RNA-binding domain maps to 91-157 (CRLDNVVYRA…TPFIVARETH (67 aa)).

It belongs to the universal ribosomal protein uS4 family. Part of the 30S ribosomal subunit. Contacts protein S5. The interaction surface between S4 and S5 is involved in control of translational fidelity.

In terms of biological role, one of the primary rRNA binding proteins, it binds directly to 16S rRNA where it nucleates assembly of the body of the 30S subunit. Its function is as follows. With S5 and S12 plays an important role in translational accuracy. The polypeptide is Small ribosomal subunit protein uS4 (Nocardioides sp. (strain ATCC BAA-499 / JS614)).